Consider the following 353-residue polypeptide: S-adenosylmethionine:tRNA ribosyltransferase-isomerase (353 aa).

Belongs to the QueA family. As to quaternary structure, monomer.

The protein resides in the cytoplasm. It catalyses the reaction 7-aminomethyl-7-carbaguanosine(34) in tRNA + S-adenosyl-L-methionine = epoxyqueuosine(34) in tRNA + adenine + L-methionine + 2 H(+). The protein operates within tRNA modification; tRNA-queuosine biosynthesis. Functionally, transfers and isomerizes the ribose moiety from AdoMet to the 7-aminomethyl group of 7-deazaguanine (preQ1-tRNA) to give epoxyqueuosine (oQ-tRNA). In Cupriavidus metallidurans (strain ATCC 43123 / DSM 2839 / NBRC 102507 / CH34) (Ralstonia metallidurans), this protein is S-adenosylmethionine:tRNA ribosyltransferase-isomerase.